The following is a 358-amino-acid chain: Probable BOI-related E3 ubiquitin-protein ligase 2 (358 aa).

Residues 171 to 234 are a coiled coil; sequence KYEIEEKRKR…NQIWRDLAQT (64 aa). The segment at 214-250 is WRD domain; sequence LEERVKSLSIENQIWRDLAQTNEATANHLRTNLEHVL. The RING-type zinc-finger motif lies at 310-345; that stretch reads CRNCGEEESCVLLLPCRHLCLCGVCGSSVHTCPICT.

As to quaternary structure, interacts with the DELLA proteins GAI, RGA, RGL1, RGL2 and RGL3.

The catalysed reaction is S-ubiquitinyl-[E2 ubiquitin-conjugating enzyme]-L-cysteine + [acceptor protein]-L-lysine = [E2 ubiquitin-conjugating enzyme]-L-cysteine + N(6)-ubiquitinyl-[acceptor protein]-L-lysine.. The protein operates within protein degradation; proteasomal ubiquitin-dependent pathway. In terms of biological role, probable E3 ubiquitin-protein ligase. Has no effect on the stability of the DELLA proteins. This chain is Probable BOI-related E3 ubiquitin-protein ligase 2 (BRG2), found in Arabidopsis thaliana (Mouse-ear cress).